A 304-amino-acid polypeptide reads, in one-letter code: Ribosomal RNA small subunit methyltransferase H (304 aa).

S-adenosyl-L-methionine is bound by residues 37 to 39 (AGH), Asp57, Phe79, Asp100, and His107.

It belongs to the methyltransferase superfamily. RsmH family.

The protein localises to the cytoplasm. The enzyme catalyses cytidine(1402) in 16S rRNA + S-adenosyl-L-methionine = N(4)-methylcytidine(1402) in 16S rRNA + S-adenosyl-L-homocysteine + H(+). In terms of biological role, specifically methylates the N4 position of cytidine in position 1402 (C1402) of 16S rRNA. In Bacteroides thetaiotaomicron (strain ATCC 29148 / DSM 2079 / JCM 5827 / CCUG 10774 / NCTC 10582 / VPI-5482 / E50), this protein is Ribosomal RNA small subunit methyltransferase H.